Here is a 139-residue protein sequence, read N- to C-terminus: Putative pre-16S rRNA nuclease (139 aa).

Belongs to the YqgF nuclease family.

Its subcellular location is the cytoplasm. Could be a nuclease involved in processing of the 5'-end of pre-16S rRNA. This is Putative pre-16S rRNA nuclease from Streptococcus pyogenes serotype M3 (strain ATCC BAA-595 / MGAS315).